The primary structure comprises 119 residues: Ribosome-binding factor A (119 aa).

The protein belongs to the RbfA family. Monomer. Binds 30S ribosomal subunits, but not 50S ribosomal subunits or 70S ribosomes.

It is found in the cytoplasm. In terms of biological role, one of several proteins that assist in the late maturation steps of the functional core of the 30S ribosomal subunit. Associates with free 30S ribosomal subunits (but not with 30S subunits that are part of 70S ribosomes or polysomes). Required for efficient processing of 16S rRNA. May interact with the 5'-terminal helix region of 16S rRNA. The polypeptide is Ribosome-binding factor A (Limosilactobacillus reuteri (strain DSM 20016) (Lactobacillus reuteri)).